The following is a 462-amino-acid chain: L-seryl-tRNA(Sec) selenium transferase (462 aa).

K292 carries the N6-(pyridoxal phosphate)lysine modification.

The protein belongs to the SelA family. Pyridoxal 5'-phosphate serves as cofactor.

The protein localises to the cytoplasm. The catalysed reaction is L-seryl-tRNA(Sec) + selenophosphate + H(+) = L-selenocysteinyl-tRNA(Sec) + phosphate. The protein operates within aminoacyl-tRNA biosynthesis; selenocysteinyl-tRNA(Sec) biosynthesis; selenocysteinyl-tRNA(Sec) from L-seryl-tRNA(Sec) (bacterial route): step 1/1. Converts seryl-tRNA(Sec) to selenocysteinyl-tRNA(Sec) required for selenoprotein biosynthesis. The chain is L-seryl-tRNA(Sec) selenium transferase from Geobacter metallireducens (strain ATCC 53774 / DSM 7210 / GS-15).